The following is a 310-amino-acid chain: 4-hydroxyproline 2-epimerase (310 aa).

The Proton acceptor role is filled by C88. Substrate contacts are provided by residues 89–90 (GH), H208, and D232. C236 serves as the catalytic Proton donor. 237-238 (GT) lines the substrate pocket.

Belongs to the proline racemase family.

The enzyme catalyses trans-4-hydroxy-L-proline = cis-4-hydroxy-D-proline. Catalyzes the epimerization of trans-4-hydroxy-L-proline (t4LHyp) to cis-4-hydroxy-D-proline (c4DHyp). Is likely involved in a degradation pathway that converts t4LHyp to alpha-ketoglutarate. Displays no proline racemase activity. The chain is 4-hydroxyproline 2-epimerase from Acinetobacter baumannii (strain AYE).